The chain runs to 127 residues: F420-non-reducing hydrogenase subunit G (127 aa).

This sequence belongs to the [NiFe]/[NiFeSe] hydrogenase small subunit family. In terms of assembly, the F420-non-reducing hydrogenase is composed of three subunits; MvhA, MvhD and MvhG. It forms a complex with the heterodisulfide reductase (hdr).

Its function is as follows. Part of a complex that provides reducing equivalents for heterodisulfide reductase. The protein is F420-non-reducing hydrogenase subunit G (mvhG) of Methanothermus fervidus.